The sequence spans 194 residues: UPF0301 protein BPEN_258 (194 aa).

Belongs to the UPF0301 (AlgH) family.

This Blochmanniella pennsylvanica (strain BPEN) protein is UPF0301 protein BPEN_258.